The sequence spans 229 residues: Prolactin (229 aa).

The signal sequence occupies residues 1 to 30 (MDSKVSSQKGSRLLLLLVVSNLLLCQGVVS). Cysteines 34 and 41 form a disulfide. 3 positions are modified to phosphoserine: Ser56, Ser64, and Ser120. Disulfide bonds link Cys88–Cys204 and Cys221–Cys229.

It belongs to the somatotropin/prolactin family. In terms of assembly, interacts with PRLR.

It is found in the secreted. In terms of biological role, prolactin acts primarily on the mammary gland by promoting lactation. The sequence is that of Prolactin (PRL) from Cervus elaphus (Red deer).